Here is a 96-residue protein sequence, read N- to C-terminus: Exodeoxyribonuclease 7 small subunit (96 aa).

The segment covering 61–79 (ALTKDESQKTNKTGFRTES) has biased composition (basic and acidic residues). Residues 61–96 (ALTKDESQKTNKTGFRTESKSTSQTSSDSVLEEDLF) are disordered. Residues 80–89 (KSTSQTSSDS) show a composition bias toward low complexity.

It belongs to the XseB family. Heterooligomer composed of large and small subunits.

The protein resides in the cytoplasm. The enzyme catalyses Exonucleolytic cleavage in either 5'- to 3'- or 3'- to 5'-direction to yield nucleoside 5'-phosphates.. Functionally, bidirectionally degrades single-stranded DNA into large acid-insoluble oligonucleotides, which are then degraded further into small acid-soluble oligonucleotides. The protein is Exodeoxyribonuclease 7 small subunit of Leptospira borgpetersenii serovar Hardjo-bovis (strain JB197).